The primary structure comprises 541 residues: Chaperonin GroEL 1 (541 aa).

Residues 29–32 (TIGP), 86–90 (DGTTT), G415, 479–481 (NAA), and D495 each bind ATP.

It belongs to the chaperonin (HSP60) family. Forms a cylinder of 14 subunits composed of two heptameric rings stacked back-to-back. Interacts with the co-chaperonin GroES.

The protein localises to the cytoplasm. It catalyses the reaction ATP + H2O + a folded polypeptide = ADP + phosphate + an unfolded polypeptide.. Functionally, together with its co-chaperonin GroES, plays an essential role in assisting protein folding. The GroEL-GroES system forms a nano-cage that allows encapsulation of the non-native substrate proteins and provides a physical environment optimized to promote and accelerate protein folding. In Streptomyces coelicolor (strain ATCC BAA-471 / A3(2) / M145), this protein is Chaperonin GroEL 1.